The following is a 188-amino-acid chain: dCTP deaminase (188 aa).

Residues 111–116 (KSTYAR), 135–137 (TLE), Q156, Y170, and Q180 each bind dCTP. E137 (proton donor/acceptor) is an active-site residue.

This sequence belongs to the dCTP deaminase family. As to quaternary structure, homotrimer.

It catalyses the reaction dCTP + H2O + H(+) = dUTP + NH4(+). It functions in the pathway pyrimidine metabolism; dUMP biosynthesis; dUMP from dCTP (dUTP route): step 1/2. Functionally, catalyzes the deamination of dCTP to dUTP. In Neisseria meningitidis serogroup B (strain ATCC BAA-335 / MC58), this protein is dCTP deaminase.